The sequence spans 212 residues: Thiamine-phosphate synthase (212 aa).

4-amino-2-methyl-5-(diphosphooxymethyl)pyrimidine is bound by residues 43 to 47 (QYRNK) and asparagine 75. Positions 76 and 95 each coordinate Mg(2+). Serine 114 provides a ligand contact to 4-amino-2-methyl-5-(diphosphooxymethyl)pyrimidine. 141 to 143 (SMT) is a 2-[(2R,5Z)-2-carboxy-4-methylthiazol-5(2H)-ylidene]ethyl phosphate binding site. Residue lysine 144 coordinates 4-amino-2-methyl-5-(diphosphooxymethyl)pyrimidine. Residue glycine 171 coordinates 2-[(2R,5Z)-2-carboxy-4-methylthiazol-5(2H)-ylidene]ethyl phosphate.

The protein belongs to the thiamine-phosphate synthase family. Mg(2+) is required as a cofactor.

It carries out the reaction 2-[(2R,5Z)-2-carboxy-4-methylthiazol-5(2H)-ylidene]ethyl phosphate + 4-amino-2-methyl-5-(diphosphooxymethyl)pyrimidine + 2 H(+) = thiamine phosphate + CO2 + diphosphate. The enzyme catalyses 2-(2-carboxy-4-methylthiazol-5-yl)ethyl phosphate + 4-amino-2-methyl-5-(diphosphooxymethyl)pyrimidine + 2 H(+) = thiamine phosphate + CO2 + diphosphate. The catalysed reaction is 4-methyl-5-(2-phosphooxyethyl)-thiazole + 4-amino-2-methyl-5-(diphosphooxymethyl)pyrimidine + H(+) = thiamine phosphate + diphosphate. It participates in cofactor biosynthesis; thiamine diphosphate biosynthesis; thiamine phosphate from 4-amino-2-methyl-5-diphosphomethylpyrimidine and 4-methyl-5-(2-phosphoethyl)-thiazole: step 1/1. Its function is as follows. Condenses 4-methyl-5-(beta-hydroxyethyl)thiazole monophosphate (THZ-P) and 2-methyl-4-amino-5-hydroxymethyl pyrimidine pyrophosphate (HMP-PP) to form thiamine monophosphate (TMP). In Nitrosomonas eutropha (strain DSM 101675 / C91 / Nm57), this protein is Thiamine-phosphate synthase.